A 520-amino-acid chain; its full sequence is UDP-N-acetylmuramoyl-L-alanyl-D-glutamate--2,6-diaminopimelate ligase (520 aa).

L48 contacts UDP-N-acetyl-alpha-D-muramoyl-L-alanyl-D-glutamate. Residue 134–140 (GTSGKTT) coordinates ATP. Residues 176 to 177 (TT), S203, and R211 contribute to the UDP-N-acetyl-alpha-D-muramoyl-L-alanyl-D-glutamate site. N6-carboxylysine is present on K243. Meso-2,6-diaminopimelate-binding positions include R405, 429-432 (DNPR), G483, and E487. The Meso-diaminopimelate recognition motif signature appears at 429 to 432 (DNPR).

It belongs to the MurCDEF family. MurE subfamily. Mg(2+) is required as a cofactor. Post-translationally, carboxylation is probably crucial for Mg(2+) binding and, consequently, for the gamma-phosphate positioning of ATP.

It is found in the cytoplasm. It carries out the reaction UDP-N-acetyl-alpha-D-muramoyl-L-alanyl-D-glutamate + meso-2,6-diaminopimelate + ATP = UDP-N-acetyl-alpha-D-muramoyl-L-alanyl-gamma-D-glutamyl-meso-2,6-diaminopimelate + ADP + phosphate + H(+). It functions in the pathway cell wall biogenesis; peptidoglycan biosynthesis. Catalyzes the addition of meso-diaminopimelic acid to the nucleotide precursor UDP-N-acetylmuramoyl-L-alanyl-D-glutamate (UMAG) in the biosynthesis of bacterial cell-wall peptidoglycan. In Mycobacterium avium (strain 104), this protein is UDP-N-acetylmuramoyl-L-alanyl-D-glutamate--2,6-diaminopimelate ligase.